The sequence spans 124 residues: Competence protein ComGG (124 aa).

The signal sequence occupies residues 1 to 28 (MYRTRGFIYPAVLFVSALVLLIVNFVAA).

The transformation pili are flexible filaments, consisting mainly of the major pilin ComGC and smaller amounts of the minor pilins, including at least ComGD, ComGF and ComGG. Interacts with ComGC; the interaction is probably direct. Interacts with ComGD. Interacts with ComGF. May act as a link between ComGC, ComGD and ComGF. Homodimer; disulfide-linked. A minor fraction of ComGG is found as a disulfide-bonded homodimer. Partial processing of ComGG in competent cells requires ComC.

The protein localises to the cell membrane. It localises to the secreted. Its function is as follows. Required for formation of the type IV-like pilus (T4P) that plays a role in transformation. Transformation pili are dynamically extended and retracted, perhaps thereby promoting DNA uptake and transformation. Required for transformation and DNA binding. The sequence is that of Competence protein ComGG (comGG) from Bacillus subtilis (strain 168).